The primary structure comprises 998 residues: MTIKIILGEHQITRTELLGGIVIVSGCGAVAYCISKFWGYGAIAPYPQSGGNRVTRALQRAVIDKTKTPIKTHFYPLDSLRTVTPRRASDNGHAVSGAVRDAARRLINESIETVGGSKFELNPNPNSTMGPRNHFHFAVGDLAQNFRDDQPAADAFIVGVDVDYYITEPDVLLEHMRPLVLHTFNPKKVSGFDADSPFTINNNLVEYKVSGGAAWVHPVWDWCEAGEFIASRVRSSWFEWLLQLPLRCLGLERVGYHKIHHCRPWTDCPDRALVYTIPQHTVWRFTWIDTEIHTRKLKRITYQDNTKPGWNRLEHVSDNNQLLVSIGREGEHMQITIEKDKLEMLSGLGATQSVNARLIGMGHKDPLYTSMIVQYYTGKKVVLSVAPTVYRPTMPRVHWPVTSDADVPEVSARQYTKPIISDCMMMPMIKRWETMSESIERRVTFVANNKKPSDAVAKIAAEFVSLMNGPFIDLEPLTIEETVERLNKPSQQLQLRAVFEIMGVEPRQVIESFNKNEPGMKSSRIISAFPDILFIVKVSRYTLAYSDAVLHAEHNQHWYYPGRTPVGITDGVCEFVSDCDGQVIETDFSNLDGRVSGWMQRNIAQKAMVQAFRAEYRDEIISFMDTIINCPAKAKRFGFRYEPGMGVKSGSPTTTPHNTQYNACVEYTALKFEYPDANPEDLFSLLGPKCGDDGLARATIQKTINRAAKCYGLELKVEKYNPEVGLCFLSRVFVDPLNTPTTIQDPLRTLRKLHITTRDPTIPIADAACDRVEGYLCTDAHTPLISEYCRMVQRLYGPKTSTRDVREARRSRNKEKPYWLTCDGSWPQHPQDALLMKQIVVSRTGIDEDTVDKLIGRFAAMKDVWEPITLESEESKAAQTIDEEGVAPGSVDESLLKLNDAKQTRSNSGTSGPHTKGGGSGTGNELPRSTKQRAKGPRQSAGLPKQGKANSKPNGNVAAGQAQHGGIPRGKTPSGGKTNARRAPPKAGAQPGAPTNPK.

The chain crosses the membrane as a helical span at residues 21–43; sequence IVIVSGCGAVAYCISKFWGYGAI. The segment at 44 to 998 is cytoplasmic; the sequence is APYPQSGGNR…AQPGAPTNPK (955 aa). The interval 91-282 is capping; the sequence is NGHAVSGAVR…LVYTIPQHTV (192 aa). Catalysis depends on aspartate 692, which acts as the For RdRp/TNTase activity. Residues 901-998 are disordered; it reads AKQTRSNSGT…AQPGAPTNPK (98 aa). Residues 985-998 are compositionally biased toward low complexity; it reads PKAGAQPGAPTNPK.

Belongs to the nodaviridae RNA polymerase family. As to quaternary structure, homododecamer. Forms 2 stacked rings of 35-nm in diameter, arranged in a crown-like structure at the opening of virus-induced replication vesicles. Interacts with protein B2. Mn(2+) serves as cofactor.

It is found in the host mitochondrion outer membrane. The catalysed reaction is RNA(n) + a ribonucleoside 5'-triphosphate = RNA(n+1) + diphosphate. Its function is as follows. RNA-dependent RNA polymerase, which replicates the viral genome composed of 2 RNA segments, RNA1 and RNA2. Does not need an exogenous primer. Also possesses a terminal nucleotidyl transferase (TNTase) activity. The TNTase catalyzes the addition of nucleotide to the 3'-end of plus- and minus-stranded RNAs, probably to repair the 3'-end nucleotide loss. Forms the open necked connection to the cytosol of the virus-induced replication vesicles. Mediates viral RNA1 recruitment. The protein is RNA-directed RNA polymerase of Hepialidae (ghost moths).